Here is a 1152-residue protein sequence, read N- to C-terminus: Autotransporter adhesin BpaC (1152 aa).

The first 71 residues, 1–71, serve as a signal peptide directing secretion; the sequence is MNRIFKSIWC…PFAEEAMAAN (71 aa). The segment at 72–1061 is surface exposed passenger domain; it reads NAGVCLTYNG…VGQLNSAVSG (990 aa). Disordered stretches follow at residues 420–886 and 900–949; these read GLQG…AGAT and TATG…ESAA. Residues 427 to 442 are compositionally biased toward polar residues; that stretch reads ANTGTASGDNSTASGD. Over residues 443–504 the composition is skewed to low complexity; sequence NATASGTNST…ANGTNSTASG (62 aa). Residues 505-519 show a composition bias toward polar residues; that stretch reads DNSTASGTNASATGE. Residues 520–588 show a composition bias toward low complexity; that stretch reads NSTATGTDST…ANGTNSTASG (69 aa). Residues 589–603 show a composition bias toward polar residues; sequence DNSTASGTNASATGE. The segment covering 604-630 has biased composition (low complexity); that stretch reads NSTATGTDSTASGSNSTANGTNSTASG. Positions 631–645 are enriched in polar residues; the sequence is DNSTASGTNASATGE. Residues 646 to 672 show a composition bias toward low complexity; that stretch reads NSTATGTDSTASGSNSTANGTNSTASG. Residues 673-687 are compositionally biased toward polar residues; that stretch reads DNSTASGTNASATGE. A compositionally biased stretch (low complexity) spans 688–714; the sequence is NSTATGTDSTASGSNSTANGTNSTASG. A compositionally biased stretch (polar residues) spans 715–729; that stretch reads DNSTASGTNASATGE. Over residues 730–756 the composition is skewed to low complexity; the sequence is NSTATGTDSTASGSNSTANGANSTASG. The span at 757–771 shows a compositional bias: polar residues; the sequence is DNSTASGTNASATGE. Composition is skewed to low complexity over residues 772 to 840 and 848 to 886; these read NSTA…TASG and TNAS…AGAT. The segment at 1062–1099 is outer membrane translocation of the passenger domain; sequence IRNQMDGMQGQIDTLARDAYSGIAAATALTMIPDVDPG. The interval 1100-1152 is translocator domain; the sequence is KTLAVGIGTANFKGYQASALGATARITQNLKVKTGVSYSGSNYVWGAGMSYQW.

It belongs to the autotransporter-2 (AT-2) (TC 1.B.40) family. In terms of assembly, homotrimer.

The protein resides in the cell surface. Its subcellular location is the cell outer membrane. Its function is as follows. Involved in virulence. Mediates adherence to human respiratory epithelial cells. The protein is Autotransporter adhesin BpaC of Burkholderia pseudomallei (strain 1026b).